Here is a 417-residue protein sequence, read N- to C-terminus: NADH-quinone oxidoreductase subunit D (417 aa).

The protein belongs to the complex I 49 kDa subunit family. In terms of assembly, NDH-1 is composed of 14 different subunits. Subunits NuoB, C, D, E, F, and G constitute the peripheral sector of the complex.

The protein resides in the cell inner membrane. It carries out the reaction a quinone + NADH + 5 H(+)(in) = a quinol + NAD(+) + 4 H(+)(out). NDH-1 shuttles electrons from NADH, via FMN and iron-sulfur (Fe-S) centers, to quinones in the respiratory chain. The immediate electron acceptor for the enzyme in this species is believed to be ubiquinone. Couples the redox reaction to proton translocation (for every two electrons transferred, four hydrogen ions are translocated across the cytoplasmic membrane), and thus conserves the redox energy in a proton gradient. The polypeptide is NADH-quinone oxidoreductase subunit D (Legionella pneumophila (strain Corby)).